Reading from the N-terminus, the 718-residue chain is Exostosin-2 (718 aa).

Over 1–25 (MCASVKSNIRGPALIPRMKTKHRIY) the chain is Cytoplasmic. The helical; Signal-anchor for type II membrane protein transmembrane segment at 26–46 (YVTLFSIVLLGLIATGMFQFW) threads the bilayer. Residues 47–718 (PHSIESSSDG…LKSFPNIGSL (672 aa)) are Lumenal-facing. Intrachain disulfides connect Cys-85/Cys-90, Cys-96/Cys-151, Cys-286/Cys-300, and Cys-318/Cys-339. N-linked (GlcNAc...) asparagine glycosylation is present at Asn-288. Residues Leu-461, Arg-465, Asn-490, and Asn-517 each coordinate UDP. Residues Arg-465, Asn-490, Asn-517, Arg-522, Asp-538, Asp-539, and Asp-540 each contribute to the UDP-N-acetyl-alpha-D-glucosamine site. UDP-binding residues include Asp-538 and Asp-539. Asp-540 lines the Mn(2+) pocket. The a protein site is built by Tyr-582 and Ser-584. A disulfide bridge connects residues Cys-626 and Cys-676. Positions 627 and 628 each coordinate UDP-N-acetyl-alpha-D-glucosamine. An N-linked (GlcNAc...) asparagine glycan is attached at Asn-637. Lys-651 and Lys-653 together coordinate a protein. Arg-673 contacts UDP-N-acetyl-alpha-D-glucosamine.

It belongs to the glycosyltransferase 47 family. Part of the heparan sulfate polymerase, a dimeric complex composed of EXT1 and EXT2. Could also form homooligomeric complexes. Interacts with NDST1. Interacts with GALNT5. It depends on Mn(2+) as a cofactor. Post-translationally, N-glycosylated at Asn-637. In terms of processing, a soluble form is generated by proteolytic processing. In terms of tissue distribution, expressed in heart, brain, spleen, lung, liver, skeletal muscle and testis. Heart shows a high expression.

It is found in the golgi apparatus membrane. Its subcellular location is the golgi apparatus. The protein localises to the cis-Golgi network membrane. The protein resides in the endoplasmic reticulum membrane. It localises to the secreted. It carries out the reaction 3-O-{[(1-&gt;4)-beta-D-GlcA-(1-&gt;4)-alpha-D-GlcNAc](n)-(1-&gt;4)-beta-D-GlcA-(1-&gt;3)-beta-D-Gal-(1-&gt;3)-beta-D-Gal-(1-&gt;4)-beta-D-Xyl}-L-seryl-[protein] + UDP-N-acetyl-alpha-D-glucosamine = 3-O-{alpha-D-GlcNAc-[(1-&gt;4)-beta-D-GlcA-(1-&gt;4)-alpha-D-GlcNAc](n)-(1-&gt;4)-beta-D-GlcA-(1-&gt;3)-beta-D-Gal-(1-&gt;3)-beta-D-Gal-(1-&gt;4)-beta-D-Xyl}-L-seryl-[protein] + UDP + H(+). It participates in protein modification; protein glycosylation. Functionally, glycosyltransferase forming with EXT1 the heterodimeric heparan sulfate polymerase which catalyzes the elongation of the heparan sulfate glycan backbone. Glycan backbone extension consists in the alternating transfer of (1-&gt;4)-beta-D-GlcA and (1-&gt;4)-alpha-D-GlcNAc residues from their respective UDP-sugar donors. Both EXT1 and EXT2 are required for the full activity of the polymerase since EXT1 bears the N-acetylglucosaminyl-proteoglycan 4-beta-glucuronosyltransferase activity within the complex while EXT2 carries the glucuronosyl-N-acetylglucosaminyl-proteoglycan 4-alpha-N-acetylglucosaminyltransferase activity. Heparan sulfate proteoglycans are ubiquitous components of the extracellular matrix and play an important role in tissue homeostasis and signaling. The chain is Exostosin-2 from Mus musculus (Mouse).